The primary structure comprises 838 residues: Translation initiation factor IF-2 (838 aa).

Disordered regions lie at residues 30 to 60 and 94 to 254; these read PHTA…KVEE and QRSP…PTGP. Composition is skewed to basic and acidic residues over residues 33-43 and 96-136; these read AAEEHVSDSEK and SPEE…EARR. Positions 137-173 are enriched in low complexity; that stretch reads QPAPVAEPVAAQAAAPAPAPVVEPVQEAPVATAAPAA. 2 stretches are compositionally biased toward basic and acidic residues: residues 174–214 and 222–231; these read DARK…EKAP and TTDEESDGFR. Basic residues predominate over residues 232–245; it reads RGGRGKAKLKKRNA. Positions 338 to 507 constitute a tr-type G domain; it reads ARAPVVTVMG…LLQAEVLELK (170 aa). The segment at 347–354 is G1; that stretch reads GHVDHGKT. 347–354 contacts GTP; sequence GHVDHGKT. Residues 372–376 form a G2 region; it reads GITQH. The G3 stretch occupies residues 393–396; it reads DTPG. GTP-binding positions include 393–397 and 447–450; these read DTPGH and NKID. The interval 447–450 is G4; it reads NKID. Residues 483–485 are G5; the sequence is SAK.

The protein belongs to the TRAFAC class translation factor GTPase superfamily. Classic translation factor GTPase family. IF-2 subfamily.

The protein localises to the cytoplasm. One of the essential components for the initiation of protein synthesis. Protects formylmethionyl-tRNA from spontaneous hydrolysis and promotes its binding to the 30S ribosomal subunits. Also involved in the hydrolysis of GTP during the formation of the 70S ribosomal complex. The protein is Translation initiation factor IF-2 of Pseudomonas fluorescens (strain ATCC BAA-477 / NRRL B-23932 / Pf-5).